The primary structure comprises 329 residues: Transcription factor RF2b (329 aa).

Disordered stretches follow at residues M1–V24 and S62–G97. The bZIP domain occupies D132–L195. The tract at residues K134–R155 is basic motif. The tract at residues L160 to L174 is leucine-zipper. A disordered region spans residues R260–G303.

The protein belongs to the bZIP family. In terms of assembly, binds DNA as a homodimer or as a heterodimer with RF2a. The heterodimer binds stronger to DNA than the homodimer. As to expression, expressed at high levels in roots, low level in leaf sheath, but not in leaf blade. Predominantly expressed in vascular tissues.

It is found in the nucleus. Transcription factor probably involved in vascular development and shoot tissue organization. Binds to the DNA sequence 5'-CCGAGTGTGCCCCTGG-3' present in the promoter region Box II of the phloem-specific rice tungro bacilliform virus (RTBV) promoter. May regulate tissue-specific expression of the RTBV promoter and virus replication. The chain is Transcription factor RF2b (RF2b) from Oryza sativa subsp. japonica (Rice).